Here is a 100-residue protein sequence, read N- to C-terminus: Urease subunit gamma (100 aa).

It belongs to the urease gamma subunit family. Heterotrimer of UreA (gamma), UreB (beta) and UreC (alpha) subunits. Three heterotrimers associate to form the active enzyme.

The protein localises to the cytoplasm. The enzyme catalyses urea + 2 H2O + H(+) = hydrogencarbonate + 2 NH4(+). Its pathway is nitrogen metabolism; urea degradation; CO(2) and NH(3) from urea (urease route): step 1/1. This Rhodopseudomonas palustris (strain BisB5) protein is Urease subunit gamma.